We begin with the raw amino-acid sequence, 111 residues long: BET1-like protein (111 aa).

Residues 1-86 lie on the Cytoplasmic side of the membrane; the sequence is MADWTRAQSS…VARSGRDTRK (86 aa). 2 positions are modified to phosphoserine: Ser-9 and Ser-37. Positions 15–77 constitute a t-SNARE coiled-coil homology domain; the sequence is EIVDRENKRM…TGSVKRFSTV (63 aa). A helical; Anchor for type IV membrane protein membrane pass occupies residues 87 to 107; that stretch reads LLCGMAVVLIVAFFILSYLFS. Over 108-111 the chain is Vesicular; that stretch reads RTRT.

As to quaternary structure, component of a SNARE complex consisting of STX5, YKT6, GOSR1 and BET1L. Interacts with STX5. In terms of tissue distribution, widely expressed. Highest levels in heart, liver, skeletal muscle and kidney.

It is found in the golgi apparatus membrane. It localises to the golgi apparatus. The protein resides in the trans-Golgi network membrane. Its function is as follows. Vesicle SNARE required for targeting and fusion of retrograde transport vesicles with the Golgi complex. Required for the integrity of the Golgi complex. The chain is BET1-like protein from Rattus norvegicus (Rat).